The primary structure comprises 662 residues: Probable quinol oxidase subunit 1 (662 aa).

A run of 2 helical transmembrane segments spans residues 14–34 (WMIT…IAVI) and 58–78 (VMYL…ALLI). Histidine 102 is a binding site for Fe(II)-heme a. The next 8 membrane-spanning stretches (helical) occupy residues 103 to 123 (GVIM…NIVV), 140 to 160 (VSFW…IIGG), 187 to 207 (IAIQ…FVTI), 228 to 248 (FITT…LALM), 273 to 293 (FFWV…FGIY), 311 to 331 (MVWA…HHFF), 336 to 356 (GALI…PTGV), and 376 to 396 (MLFS…GVML). Cu cation-binding residues include histidine 279, tyrosine 283, histidine 328, and histidine 329. The segment at residues 279–283 (HPEVY) is a cross-link (1'-histidyl-3'-tyrosine (His-Tyr)). Heme a3 is bound at residue histidine 414. A run of 5 helical transmembrane segments spans residues 415–435 (FHYT…IFWY), 451–471 (CFWF…ILGL), 493–513 (ISTI…VSIV), 587–604 (PVGF…FFLI), and 608–627 (VIPA…YRSF). Histidine 416 lines the Fe(II)-heme a pocket.

The protein belongs to the heme-copper respiratory oxidase family. The cofactor is Cu cation. It depends on ferriheme a as a cofactor. Heme A3. is required as a cofactor.

It localises to the cell membrane. The enzyme catalyses 2 a quinol + O2 = 2 a quinone + 2 H2O. It functions in the pathway energy metabolism; oxidative phosphorylation. In terms of biological role, catalyzes quinol oxidation with the concomitant reduction of oxygen to water. This is Probable quinol oxidase subunit 1 (qoxB) from Staphylococcus aureus (strain COL).